The following is a 94-amino-acid chain: uncharacterized protein (94 aa).

Polar residues predominate over residues 33 to 42; it reads INSLPTFTKP. The disordered stretch occupies residues 33–57; sequence INSLPTFTKPNDSNNNVNKSSNDGV. Residues 43-57 show a composition bias toward low complexity; sequence NDSNNNVNKSSNDGV.

This is an uncharacterized protein from Dictyostelium discoideum (Social amoeba).